We begin with the raw amino-acid sequence, 340 residues long: Chitinase 7 (340 aa).

Residues 1-32 (MIAARAANLQVAMKALALAVLALAYAAATARA) form the signal peptide. Positions 33 to 73 (EQCGRQAGGARCPNRLCCSRWGWCGLTDDYCKGGCQSQCRV) constitute a Chitin-binding type-1 domain. 7 disulfide bridges follow: cysteine 35–cysteine 50, cysteine 44–cysteine 56, cysteine 49–cysteine 63, cysteine 67–cysteine 71, cysteine 118–cysteine 173, cysteine 185–cysteine 193, and cysteine 293–cysteine 323.

This sequence belongs to the glycosyl hydrolase 19 family. Chitinase class I subfamily. Expressed in pistils, stamens and lodicules.

The enzyme catalyses Random endo-hydrolysis of N-acetyl-beta-D-glucosaminide (1-&gt;4)-beta-linkages in chitin and chitodextrins.. Its function is as follows. Hydrolyzes chitin and may play a role in defense against fungal pathogens containing chitin. In Oryza sativa subsp. indica (Rice), this protein is Chitinase 7 (Cht7).